Reading from the N-terminus, the 118-residue chain is Small ribosomal subunit protein uS13 (118 aa).

Positions 94–118 are disordered; sequence GLPLRGQRTKTNARTRKGPRKPIRK.

Belongs to the universal ribosomal protein uS13 family. In terms of assembly, part of the 30S ribosomal subunit. Forms a loose heterodimer with protein S19. Forms two bridges to the 50S subunit in the 70S ribosome.

Its function is as follows. Located at the top of the head of the 30S subunit, it contacts several helices of the 16S rRNA. In the 70S ribosome it contacts the 23S rRNA (bridge B1a) and protein L5 of the 50S subunit (bridge B1b), connecting the 2 subunits; these bridges are implicated in subunit movement. Contacts the tRNAs in the A and P-sites. This Alcanivorax borkumensis (strain ATCC 700651 / DSM 11573 / NCIMB 13689 / SK2) protein is Small ribosomal subunit protein uS13.